The chain runs to 745 residues: MGKPTGKKKNNNYTEMPPTESSTTGGGKTGKSFDRSATKSFDDDMTIFINRALELKEEGNKLFQKRDYEGAMFRYDKAVKLLPRDHGDVAYLRTSMASCYMQMGLGEYPNAINECNLALEASPRFSKALLKRARCYEALNKLDFAFRDSRVVLNMEPENVSANEIFERVKKVLVGKGIDVDEMEKNLVNVQPVGAARLRKIVKERLRKKKKKSMTMTNGGNDGERKSVEAVVEDAKVDNGEEVDSGRKGKAIEEKKLEDKVAVMDKEVIASEIKEDATVTRTVKLVHGDDIRWAQLPLDSSVVLVRDVIKDRFPALKGFLIKYRDSEGDLVTITTTDELRLAASTREKLGSFRLYIAEVSPNQEPTYDVIDNDESTDKFAKGSSSVADNGSVGDFVESEKASTSLEHWIFQFAQLFKNHVGFDSDSYLELHNLGMKLYTEAMEDIVTGEDAQELFDIAADKFQEMAALAMFNWGNVHMSKARRQIYFPEDGSRETILEKVEAGFEWAKNEYNKAAEKYEGAVKIKSDFYEALLALGQQQFEQAKLCWYHALSGEVDIESDASQDVLKLYNKAEESMEKGMQIWEEMEERRLNGISNFDKHKELLQKLGLDGIFSEASDEESAEQTANMSSQINLLWGSLLYERSIVEYKLGLPTWDECLEVAVEKFELAGASATDIAVMVKNHCSSDNALEGMGFKIDEIVQAWNEMYDAKRWQIGVPSFRLEPLFRRRSPKLHDILENVFSGPQ.

The segment covering 1–10 (MGKPTGKKKN) has biased composition (basic residues). A disordered region spans residues 1 to 37 (MGKPTGKKKNNNYTEMPPTESSTTGGGKTGKSFDRSA). 3 TPR repeats span residues 52–85 (ALEL…LPRD), 90–125 (AYLR…SPRF), and 126–159 (SKAL…EPEN). The PB1 domain occupies 280 to 359 (TRTVKLVHGD…GSFRLYIAEV (80 aa)). TPR repeat units lie at residues 406–441 (EHWI…YTEA), 443–472 (EDIV…AMFN), 494–528 (ETIL…KSDF), and 553–586 (GEVD…WEEM).

As to quaternary structure, interacts with myosin XI-1 and XI-K.

It localises to the cytoplasmic vesicle membrane. Its function is as follows. Carboxylate clamp type tetratricopeptide repeat protein that may act as a potential Hsp90/Hsp70 co-chaperone. Contributes to polar growth of root hairs. This chain is Protein PHOX1, found in Arabidopsis thaliana (Mouse-ear cress).